A 726-amino-acid polypeptide reads, in one-letter code: Catalase-peroxidase (726 aa).

The interval methionine 1–serine 33 is disordered. The tryptophyl-tyrosyl-methioninium (Trp-Tyr) (with M-252) cross-link spans tryptophan 105–tyrosine 226. Histidine 106 (proton acceptor) is an active-site residue. Positions tyrosine 226–methionine 252 form a cross-link, tryptophyl-tyrosyl-methioninium (Tyr-Met) (with W-105). A heme b-binding site is contributed by histidine 267.

This sequence belongs to the peroxidase family. Peroxidase/catalase subfamily. As to quaternary structure, homodimer or homotetramer. Heme b is required as a cofactor. Post-translationally, formation of the three residue Trp-Tyr-Met cross-link is important for the catalase, but not the peroxidase activity of the enzyme.

The catalysed reaction is H2O2 + AH2 = A + 2 H2O. It carries out the reaction 2 H2O2 = O2 + 2 H2O. In terms of biological role, bifunctional enzyme with both catalase and broad-spectrum peroxidase activity. The sequence is that of Catalase-peroxidase from Salmonella paratyphi B (strain ATCC BAA-1250 / SPB7).